The following is a 473-amino-acid chain: Protein nucleotidyltransferase YdiU (473 aa).

Residues G79, G81, R82, K102, D114, G115, R165, and R172 each coordinate ATP. Residue D241 is the Proton acceptor of the active site. N242 and D251 together coordinate Mg(2+). Residue D251 participates in ATP binding.

Belongs to the SELO family. Mg(2+) is required as a cofactor. Requires Mn(2+) as cofactor.

The catalysed reaction is L-seryl-[protein] + ATP = 3-O-(5'-adenylyl)-L-seryl-[protein] + diphosphate. It catalyses the reaction L-threonyl-[protein] + ATP = 3-O-(5'-adenylyl)-L-threonyl-[protein] + diphosphate. It carries out the reaction L-tyrosyl-[protein] + ATP = O-(5'-adenylyl)-L-tyrosyl-[protein] + diphosphate. The enzyme catalyses L-histidyl-[protein] + UTP = N(tele)-(5'-uridylyl)-L-histidyl-[protein] + diphosphate. The catalysed reaction is L-seryl-[protein] + UTP = O-(5'-uridylyl)-L-seryl-[protein] + diphosphate. It catalyses the reaction L-tyrosyl-[protein] + UTP = O-(5'-uridylyl)-L-tyrosyl-[protein] + diphosphate. Functionally, nucleotidyltransferase involved in the post-translational modification of proteins. It can catalyze the addition of adenosine monophosphate (AMP) or uridine monophosphate (UMP) to a protein, resulting in modifications known as AMPylation and UMPylation. The polypeptide is Protein nucleotidyltransferase YdiU (Marinomonas sp. (strain MWYL1)).